A 379-amino-acid polypeptide reads, in one-letter code: Probable RNA 3'-terminal phosphate cyclase-like protein (379 aa).

The protein belongs to the RNA 3'-terminal cyclase family. Type 2 subfamily. As to quaternary structure, part of the small subunit (SSU) processome, composed of more than 70 proteins and the RNA chaperone small nucleolar RNA (snoRNA) U3.

It is found in the nucleus. It localises to the nucleolus. Functionally, part of the small subunit (SSU) processome, first precursor of the small eukaryotic ribosomal subunit. During the assembly of the SSU processome in the nucleolus, many ribosome biogenesis factors, an RNA chaperone and ribosomal proteins associate with the nascent pre-rRNA and work in concert to generate RNA folding, modifications, rearrangements and cleavage as well as targeted degradation of pre-ribosomal RNA by the RNA exosome. Does not have cyclase activity. The sequence is that of Probable RNA 3'-terminal phosphate cyclase-like protein from Caenorhabditis elegans.